The sequence spans 324 residues: Phospho-N-acetylmuramoyl-pentapeptide-transferase (324 aa).

The next 10 helical transmembrane spans lie at 5–25, 52–72, 77–97, 122–142, 149–169, 176–196, 201–221, 227–247, 253–273, and 302–322; these read GLLV…PLFI, PTMG…IMAI, LGAE…IGFL, VIAI…YIMI, FELG…GSNA, LDGL…IIAV, FGVA…LVFN, VFMG…VAIL, LLVI…IQVI, and VVVT…YIGV.

The protein belongs to the glycosyltransferase 4 family. MraY subfamily. The cofactor is Mg(2+).

It localises to the cell membrane. It carries out the reaction UDP-N-acetyl-alpha-D-muramoyl-L-alanyl-gamma-D-glutamyl-meso-2,6-diaminopimeloyl-D-alanyl-D-alanine + di-trans,octa-cis-undecaprenyl phosphate = di-trans,octa-cis-undecaprenyl diphospho-N-acetyl-alpha-D-muramoyl-L-alanyl-D-glutamyl-meso-2,6-diaminopimeloyl-D-alanyl-D-alanine + UMP. Its pathway is cell wall biogenesis; peptidoglycan biosynthesis. Its function is as follows. Catalyzes the initial step of the lipid cycle reactions in the biosynthesis of the cell wall peptidoglycan: transfers peptidoglycan precursor phospho-MurNAc-pentapeptide from UDP-MurNAc-pentapeptide onto the lipid carrier undecaprenyl phosphate, yielding undecaprenyl-pyrophosphoryl-MurNAc-pentapeptide, known as lipid I. This chain is Phospho-N-acetylmuramoyl-pentapeptide-transferase, found in Bacillus mycoides (strain KBAB4) (Bacillus weihenstephanensis).